Consider the following 160-residue polypeptide: Cell cycle regulator of non-homologous end joining (160 aa).

Met1 is modified (N-acetylmethionine). A KBM motif is present at residues 1–21; it reads METLKSDNKKRVLPSWMTAPG. Residues 78 to 152 are disordered; that stretch reads KPWEQPSLVA…EGKEEEDELK (75 aa). The span at 99–109 shows a compositional bias: low complexity; it reads ESPHTSSPGSS. An XLM motif is present at residues 150–160; sequence ELKYVREIFFS.

As to quaternary structure, interacts (via KBM motif) with XRCC5/Ku80 and XRCC6/Ku70 heterodimer. Interacts (via XLF motif) with TRIM28/KAP1, ATM, MRE11, NBN and RAD50. Interacts with splicing factor SF3B1. Interacts with ERCC6L2; this interaction is DNA independent.

The protein resides in the cytoplasm. It localises to the nucleus. The protein localises to the chromosome. Cell-cycle-specific regulator of classical non-homologous end joining (NHEJ) of DNA double-strand break (DSB) repair, which can act both as an activator or inhibitor of NHEJ, depending on the cell cycle phase. Acts as a regulator of DNA repair pathway choice by specifically inhibiting classical NHEJ during the S and G2 phases, thereby promoting error-free repair by homologous recombination during cell cycle phases when sister chromatids are present. Preferentially protects single-stranded overhangs at break sites by inhibiting classical NHEJ, thereby creating a local environment that favors homologous recombination. Acts via interaction with XRCC5/Ku80 and XRCC6/Ku70. In contrast, acts as an activator of NHEJ during G1 phase of the cell cycle: promotes classical NHEJ in G1 phase cells via multivalent interactions that increase the affinity of DNA damage response proteins for DSB-associated chromatin. Also involved in immunoglobulin V(D)J recombination. May also act as an indirect regulator of proteasome. The protein is Cell cycle regulator of non-homologous end joining of Rattus norvegicus (Rat).